The primary structure comprises 313 residues: Glycine--tRNA ligase alpha subunit (313 aa).

It belongs to the class-II aminoacyl-tRNA synthetase family. In terms of assembly, tetramer of two alpha and two beta subunits.

It localises to the cytoplasm. The enzyme catalyses tRNA(Gly) + glycine + ATP = glycyl-tRNA(Gly) + AMP + diphosphate. This is Glycine--tRNA ligase alpha subunit from Leuconostoc mesenteroides subsp. mesenteroides (strain ATCC 8293 / DSM 20343 / BCRC 11652 / CCM 1803 / JCM 6124 / NCDO 523 / NBRC 100496 / NCIMB 8023 / NCTC 12954 / NRRL B-1118 / 37Y).